The sequence spans 210 residues: uncharacterized protein (210 aa).

This is an uncharacterized protein from Mycobacterium bovis (strain ATCC BAA-935 / AF2122/97).